Reading from the N-terminus, the 290-residue chain is Arylamine N-acetyltransferase, pineal gland isozyme NAT-10 (290 aa).

Residue Cys-68 is the Acyl-thioester intermediate of the active site. Active-site residues include His-107 and Asp-122.

The protein belongs to the arylamine N-acetyltransferase family.

The enzyme catalyses an arylamine + acetyl-CoA = an N-acetylarylamine + CoA. This Gallus gallus (Chicken) protein is Arylamine N-acetyltransferase, pineal gland isozyme NAT-10.